The sequence spans 140 residues: Small ribosomal subunit protein uS19 (140 aa).

It belongs to the universal ribosomal protein uS19 family.

Its function is as follows. Protein S19 forms a complex with S13 that binds strongly to the 16S ribosomal RNA. This Methanocella arvoryzae (strain DSM 22066 / NBRC 105507 / MRE50) protein is Small ribosomal subunit protein uS19.